The sequence spans 4128 residues: DNA-dependent protein kinase catalytic subunit (4128 aa).

Lys-117 carries the post-translational modification N6-acetyllysine. The HEAT 1 repeat unit spans residues 288–323 (DNYVSLFEVLLKWCAHTNVELKKAALSALESFLKQV). Ser-511 and Ser-687 each carry phosphoserine. At Lys-828 the chain carries N6-acetyllysine. A phosphoserine mark is found at Ser-841 and Ser-893. Residues 1004-1040 (QDTVALLEAILDGIVDPVDSTLRDFCGRCIREFLKWS) form an HEAT 2 repeat. Ser-1065 carries the phosphoserine modification. N6-acetyllysine is present on Lys-1209. The tract at residues 1503–1538 (LDLSCKQLASGLLELAFAFGGLCERLVSLLLNPAVL) is interaction with C1D. A leucine-zipper region spans residues 1503-1538 (LDLSCKQLASGLLELAFAFGGLCERLVSLLLNPAVL). One copy of the TPR 1 repeat lies at 1723–1756 (PMQSREFPPGTPRFNNYVDCMKKFLDALELSQSP). The residue at position 1970 (Lys-1970) is an N6-acetyllysine. The segment at 2050 to 2073 (QSYSYSSQDPRPATGRFRRREQRD) is disordered. Ser-2056 carries the phosphoserine; by autocatalysis modification. Residue Lys-2259 is modified to N6-acetyllysine. The KIP-binding stretch occupies residues 2436-3212 (LDIIYKMMPK…DNSMNVDQDG (777 aa)). Thr-2535 is subject to Phosphothreonine. Thr-2609 is subject to Phosphothreonine; by autocatalysis. Ser-2612 carries the phosphoserine; by autocatalysis modification. Residues Thr-2638 and Thr-2647 each carry the phosphothreonine; by autocatalysis modification. The interval 2737 to 2765 (EKLSLMYARKGVAEQKREKEIKSELKMKQ) is may split the end of the DNA molecule, with the two strands separating around the region. At Ser-2789 the chain carries Phosphoserine. The 634-residue stretch at 2906 to 3539 (PAKRVRGKAR…VYPFIISSES (634 aa)) folds into the FAT domain. 2 TPR repeats span residues 2920–2948 (VLRW…SEIG) and 2949–2982 (TKQI…QDWV). Residues 3200–3222 (LPEDNSMNVDQDGDPSDRMEVQE) form a disordered region. Phosphoserine is present on Ser-3205. N6-acetyllysine occurs at positions 3241, 3260, 3621, 3638, and 3642. Residues 3722–4053 (FDERVTVMAS…ICYAKRKLAG (332 aa)) form the PI3K/PI4K catalytic domain. Positions 3728-3734 (VMASLRR) are G-loop. A phosphoserine mark is found at Ser-3731 and Ser-3821. The interval 3919–3927 (GIGDRHLNN) is catalytic loop. The interval 3939–3964 (GIDFGHAFGSATQFLPVPELMPFRLT) is activation loop. Ser-4026 is subject to Phosphoserine. Residues 4096 to 4128 (SGLSEETQVKCLMDQATDPNILGRTWEGWEPWM) enclose the FATC domain.

It belongs to the PI3/PI4-kinase family. In terms of assembly, DNA-PK is a heterotrimer of PRKDC and the Ku dimer (composed of XRCC6/Ku70 and XRCC5/Ku86). Formation of this complex may be promoted by interaction with ILF3. Component of the core long-range non-homologous end joining (NHEJ) complex (also named DNA-PK complex) composed of PRKDC, LIG4, XRCC4, XRCC6/Ku70, XRCC5/Ku86 and NHEJ1/XLF. Additional component of the NHEJ complex includes PAXX. Following autophosphorylation, PRKDC dissociates from DNA. Interacts with DNA-PKcs-interacting protein (KIP) with the region upstream the kinase domain. PRKDC alone also interacts with and phosphorylates DCLRE1C, thereby activating the latent endonuclease activity of this protein. Interacts with C1D. Interacts with TTI1 and TELO2. Interacts with CIB1. Interacts with SETX. Interacts with NR4A3; the DNA-dependent protein kinase complex DNA-PK phosphorylates and activates NR4A3 and prevents NR4A3 ubiquitination and degradation. Interacts with BRAT1. Part of the HDP-RNP complex composed of at least HEXIM1, PRKDC, XRCC5, XRCC6, paraspeckle proteins (SFPQ, NONO, PSPC1, RBM14, and MATR3) and NEAT1 RNA. Interacts with KAT5. Post-translationally, autophosphorylated at two clusters, the T2609 cluster and the S2056 cluster. Autophosphorylated on Ser-2056, Thr-2609, Thr-2638 and Thr-2647. Ser-2056 and Thr-2609 are DNA damage-inducible phosphorylation sites (inducible with ionizing radiation, IR) dephosphorylated by PPP5C. Autophosphorylation induces a conformational change that leads to remodeling of the DNA-PK complex, requisite for efficient end processing and DNA repair. Autophosphorylation in trans within DNA-PK complexes loaded on DNA ends leads to the dissociation of PRKDC from DNA and the transition into the short-range NHEJ complex. Autophosphorylation of the T2609 cluster is required for hematopoietic development and protein synthesis in erythrocytes precursors. S-nitrosylated by GAPDH. In terms of processing, polyubiquitinated by RNF144A, leading to proteasomal degradation.

The protein resides in the nucleus. It localises to the nucleolus. The protein localises to the cytoplasm. Its subcellular location is the cytosol. It catalyses the reaction L-seryl-[protein] + ATP = O-phospho-L-seryl-[protein] + ADP + H(+). The catalysed reaction is L-threonyl-[protein] + ATP = O-phospho-L-threonyl-[protein] + ADP + H(+). Activity seems to be attenuated by autophosphorylation. Binding to the SL1 region of U3 small nucleolar RNA promotes auto-phosphorylation activity. Inhibited by wortmannin. Functionally, serine/threonine-protein kinase that acts as a molecular sensor for DNA damage. Involved in DNA non-homologous end joining (NHEJ) required for double-strand break (DSB) repair and V(D)J recombination. Must be bound to DNA to express its catalytic properties. Promotes processing of hairpin DNA structures in V(D)J recombination by activation of the hairpin endonuclease artemis (DCLRE1C). Recruited by XRCC5 and XRCC6 to DNA ends and is required to (1) protect and align broken ends of DNA, thereby preventing their degradation, (2) and sequester the DSB for repair by NHEJ. Acts as a scaffold protein to aid the localization of DNA repair proteins to the site of damage. The assembly of the DNA-PK complex at DNA ends is also required for the NHEJ ligation step. Found at the ends of chromosomes, suggesting a further role in the maintenance of telomeric stability and the prevention of chromosomal end fusion. Also involved in modulation of transcription. As part of the DNA-PK complex, involved in the early steps of ribosome assembly by promoting the processing of precursor rRNA into mature 18S rRNA in the small-subunit processome. Binding to U3 small nucleolar RNA, recruits PRKDC and XRCC5/Ku86 to the small-subunit processome. Recognizes the substrate consensus sequence [ST]-Q. Phosphorylates 'Ser-139' of histone variant H2AX, thereby regulating DNA damage response mechanism. Phosphorylates ASF1A, DCLRE1C, c-Abl/ABL1, histone H1, HSPCA, c-jun/JUN, p53/TP53, PARP1, POU2F1, DHX9, FH, SRF, NHEJ1/XLF, XRCC1, XRCC4, XRCC5, XRCC6, WRN, MYC and RFA2. Can phosphorylate C1D not only in the presence of linear DNA but also in the presence of supercoiled DNA. Ability to phosphorylate p53/TP53 in the presence of supercoiled DNA is dependent on C1D. Acts as a regulator of the phosphatidylinositol 3-kinase/protein kinase B signal transduction by mediating phosphorylation of 'Ser-473' of protein kinase B (PKB/AKT1, PKB/AKT2, PKB/AKT3), promoting their activation. Contributes to the determination of the circadian period length by antagonizing phosphorylation of CRY1 'Ser-588' and increasing CRY1 protein stability, most likely through an indirect mechanism. Plays a role in the regulation of DNA virus-mediated innate immune response by assembling into the HDP-RNP complex, a complex that serves as a platform for IRF3 phosphorylation and subsequent innate immune response activation through the cGAS-STING pathway. Also regulates the cGAS-STING pathway by catalyzing phosphorylation of CGAS, thereby impairing CGAS oligomerization and activation. Also regulates the cGAS-STING pathway by mediating phosphorylation of PARP1. This is DNA-dependent protein kinase catalytic subunit (PRKDC) from Homo sapiens (Human).